Here is an 87-residue protein sequence, read N- to C-terminus: Small ribosomal subunit protein uS15 (87 aa).

It belongs to the universal ribosomal protein uS15 family. In terms of assembly, part of the 30S ribosomal subunit. Forms a bridge to the 50S subunit in the 70S ribosome, contacting the 23S rRNA.

Functionally, one of the primary rRNA binding proteins, it binds directly to 16S rRNA where it helps nucleate assembly of the platform of the 30S subunit by binding and bridging several RNA helices of the 16S rRNA. Forms an intersubunit bridge (bridge B4) with the 23S rRNA of the 50S subunit in the ribosome. The sequence is that of Small ribosomal subunit protein uS15 from Dehalococcoides mccartyi (strain ATCC BAA-2266 / KCTC 15142 / 195) (Dehalococcoides ethenogenes (strain 195)).